Here is a 210-residue protein sequence, read N- to C-terminus: Peptidyl-tRNA hydrolase (210 aa).

Residue Y15 coordinates tRNA. H20 functions as the Proton acceptor in the catalytic mechanism. F66, N68, and N114 together coordinate tRNA. The tract at residues 186-210 is disordered; it reads IHTSKPPRPKPPRREPGDGGTPATA.

Belongs to the PTH family. As to quaternary structure, monomer.

It localises to the cytoplasm. The enzyme catalyses an N-acyl-L-alpha-aminoacyl-tRNA + H2O = an N-acyl-L-amino acid + a tRNA + H(+). Hydrolyzes ribosome-free peptidyl-tRNAs (with 1 or more amino acids incorporated), which drop off the ribosome during protein synthesis, or as a result of ribosome stalling. Functionally, catalyzes the release of premature peptidyl moieties from peptidyl-tRNA molecules trapped in stalled 50S ribosomal subunits, and thus maintains levels of free tRNAs and 50S ribosomes. The sequence is that of Peptidyl-tRNA hydrolase from Variovorax paradoxus (strain S110).